Reading from the N-terminus, the 180-residue chain is Large ribosomal subunit protein uL5 (180 aa).

Belongs to the universal ribosomal protein uL5 family. Part of the 50S ribosomal subunit; part of the 5S rRNA/L5/L18/L25 subcomplex. Contacts the 5S rRNA and the P site tRNA. Forms a bridge to the 30S subunit in the 70S ribosome.

Its function is as follows. This is one of the proteins that bind and probably mediate the attachment of the 5S RNA into the large ribosomal subunit, where it forms part of the central protuberance. In the 70S ribosome it contacts protein S13 of the 30S subunit (bridge B1b), connecting the 2 subunits; this bridge is implicated in subunit movement. Contacts the P site tRNA; the 5S rRNA and some of its associated proteins might help stabilize positioning of ribosome-bound tRNAs. This chain is Large ribosomal subunit protein uL5, found in Streptococcus sanguinis (strain SK36).